We begin with the raw amino-acid sequence, 215 residues long: Imidazole glycerol phosphate synthase subunit HisH (215 aa).

The 209-residue stretch at 7–215 folds into the Glutamine amidotransferase type-1 domain; it reads TIAVIDYGMG…LLKNFVEWQP (209 aa). Cys86 (nucleophile) is an active-site residue. Residues His195 and Glu197 contribute to the active site.

As to quaternary structure, heterodimer of HisH and HisF.

It localises to the cytoplasm. The enzyme catalyses 5-[(5-phospho-1-deoxy-D-ribulos-1-ylimino)methylamino]-1-(5-phospho-beta-D-ribosyl)imidazole-4-carboxamide + L-glutamine = D-erythro-1-(imidazol-4-yl)glycerol 3-phosphate + 5-amino-1-(5-phospho-beta-D-ribosyl)imidazole-4-carboxamide + L-glutamate + H(+). It catalyses the reaction L-glutamine + H2O = L-glutamate + NH4(+). Its pathway is amino-acid biosynthesis; L-histidine biosynthesis; L-histidine from 5-phospho-alpha-D-ribose 1-diphosphate: step 5/9. In terms of biological role, IGPS catalyzes the conversion of PRFAR and glutamine to IGP, AICAR and glutamate. The HisH subunit catalyzes the hydrolysis of glutamine to glutamate and ammonia as part of the synthesis of IGP and AICAR. The resulting ammonia molecule is channeled to the active site of HisF. The sequence is that of Imidazole glycerol phosphate synthase subunit HisH from Dechloromonas aromatica (strain RCB).